Consider the following 161-residue polypeptide: Putative allophycocyanin subunit alpha 2 (161 aa).

N71 carries the post-translational modification N4-methylasparagine. C81 is a binding site for (2R,3E)-phycocyanobilin.

Belongs to the phycobiliprotein family. In terms of assembly, heterohexamer of two alpha chains, one alpha-B chain and three beta chains. In terms of processing, contains one covalently linked phycocyanobilin chromophore. The chromophore is added by phycocyanobilin lyase CpcS 1.

It is found in the cellular thylakoid membrane. Its function is as follows. Light-harvesting photosynthetic bile pigment-protein from the phycobiliprotein complex. Allophycocyanin has a maximum absorption at approximately 650 to 653 nanometers. The sequence is that of Putative allophycocyanin subunit alpha 2 (apcA2) from Nostoc sp. (strain PCC 7120 / SAG 25.82 / UTEX 2576).